A 75-amino-acid polypeptide reads, in one-letter code: MGSLQLILVLFVLLSDVPPVRSGVNMYIRQIYDTCWKLKGHCRNVCGKKEIFHIFCGTQFLCCIERKEMPVLFVK.

The signal sequence occupies residues 1–22 (MGSLQLILVLFVLLSDVPPVRS). Disulfide bonds link Cys35/Cys62, Cys42/Cys56, and Cys46/Cys63.

Belongs to the beta-defensin family.

It is found in the secreted. Its function is as follows. Has antibacterial activity. The sequence is that of Beta-defensin 30 (Defb30) from Rattus norvegicus (Rat).